Consider the following 205-residue polypeptide: Suppressor of silencing 2b (205 aa).

A disordered region spans residues Ser23–Val52.

Belongs to the cucumovirus/ilarvirus protein 2b family.

It is found in the host nucleus. Acts as a suppressor of RNA-mediated gene silencing, also known as post-transcriptional gene silencing (PTGS), a mechanism of plant viral defense that limits the accumulation of viral RNAs. May directly interfere with the mobile silencing signal. The protein is Suppressor of silencing 2b of Tobacco streak virus (strain WC) (TSV).